We begin with the raw amino-acid sequence, 426 residues long: Histidine--tRNA ligase (426 aa).

The protein belongs to the class-II aminoacyl-tRNA synthetase family. In terms of assembly, homodimer.

It localises to the cytoplasm. The catalysed reaction is tRNA(His) + L-histidine + ATP = L-histidyl-tRNA(His) + AMP + diphosphate + H(+). This Picosynechococcus sp. (strain ATCC 27264 / PCC 7002 / PR-6) (Agmenellum quadruplicatum) protein is Histidine--tRNA ligase.